The sequence spans 622 residues: DNA topoisomerase 3 (622 aa).

The Toprim domain maps to 2-148 (RVLCVAEKNS…SIQVIRADFN (147 aa)). The Topo IA-type catalytic domain occupies 166-596 (SKNAADAVDA…MILTQFRDVF (431 aa)). Residue tyrosine 330 is the O-(5'-phospho-DNA)-tyrosine intermediate of the active site.

It belongs to the type IA topoisomerase family. In terms of assembly, interacts with hus2.

The enzyme catalyses ATP-independent breakage of single-stranded DNA, followed by passage and rejoining.. Its function is as follows. Releases the supercoiling and torsional tension of DNA introduced during the DNA replication and transcription by transiently cleaving and rejoining one strand of the DNA duplex. Introduces a single-strand break via transesterification at a target site in duplex DNA. The scissile phosphodiester is attacked by the catalytic tyrosine of the enzyme, resulting in the formation of a DNA-(5'-phosphotyrosyl)-enzyme intermediate and the expulsion of a 3'-OH DNA strand. The free DNA strand than undergoes passage around the unbroken strand thus removing DNA supercoils. Finally, in the religation step, the DNA 3'-OH attacks the covalent intermediate to expel the active-site tyrosine and restore the DNA phosphodiester backbone. The sequence is that of DNA topoisomerase 3 (top3) from Schizosaccharomyces pombe (strain 972 / ATCC 24843) (Fission yeast).